A 164-amino-acid chain; its full sequence is UPF0304 protein YfbU (164 aa).

Belongs to the UPF0304 family.

The chain is UPF0304 protein YfbU from Escherichia coli O127:H6 (strain E2348/69 / EPEC).